A 248-amino-acid chain; its full sequence is PF03932 family protein CutC (248 aa).

It belongs to the CutC family. As to quaternary structure, homodimer.

The protein resides in the cytoplasm. The sequence is that of PF03932 family protein CutC from Shigella boydii serotype 18 (strain CDC 3083-94 / BS512).